The following is a 203-amino-acid chain: Small ribosomal subunit protein uS7 (203 aa).

The disordered stretch occupies residues 1–21; the sequence is MSSEAPEPDAPASTDDERVSA.

This sequence belongs to the universal ribosomal protein uS7 family. As to quaternary structure, part of the 30S ribosomal subunit.

In terms of biological role, one of the primary rRNA binding proteins, it binds directly to 16S rRNA where it nucleates assembly of the head domain of the 30S subunit. Is located at the subunit interface close to the decoding center. The polypeptide is Small ribosomal subunit protein uS7 (Natronomonas pharaonis (strain ATCC 35678 / DSM 2160 / CIP 103997 / JCM 8858 / NBRC 14720 / NCIMB 2260 / Gabara) (Halobacterium pharaonis)).